Consider the following 89-residue polypeptide: Small ribosomal subunit protein uS15 (89 aa).

The protein belongs to the universal ribosomal protein uS15 family. In terms of assembly, part of the 30S ribosomal subunit. Forms a bridge to the 50S subunit in the 70S ribosome, contacting the 23S rRNA.

Functionally, one of the primary rRNA binding proteins, it binds directly to 16S rRNA where it helps nucleate assembly of the platform of the 30S subunit by binding and bridging several RNA helices of the 16S rRNA. Its function is as follows. Forms an intersubunit bridge (bridge B4) with the 23S rRNA of the 50S subunit in the ribosome. In Mycobacterium leprae (strain Br4923), this protein is Small ribosomal subunit protein uS15.